A 1019-amino-acid polypeptide reads, in one-letter code: Collagen alpha-2(VI) chain (1019 aa).

An N-terminal signal peptide occupies residues 1 to 20 (MLQGTCSVLLLWGILGAIQA). Residues 21–256 (QQQEVISPDT…YKVSCLEIPG (236 aa)) are nonhelical region. The region spanning 46–234 (HVYFVLDTSE…EIDQDTINRI (189 aa)) is the VWFA 1 domain. Asn-140 is a glycosylation site (N-linked (GlcNAc...) asparagine). Residues 257 to 588 (PSGPKGYRGQ…GEPGPPGDPG (332 aa)) are disordered. The interval 257 to 590 (PSGPKGYRGQ…PGPPGDPGLT (334 aa)) is triple-helical region. Positions 287 to 305 (DPGIEGPIGFPGPKGVPGF) are enriched in low complexity. Over residues 306–318 (KGEKGEFGADGRK) the composition is skewed to basic and acidic residues. The N-linked (GlcNAc...) asparagine glycan is linked to Asn-327. 2 stretches are compositionally biased toward basic and acidic residues: residues 365–377 (ERGD…DPGR) and 419–429 (PKGEPGRRGDP). Short sequence motifs (cell attachment site) lie at residues 366 to 368 (RGD), 426 to 428 (RGD), 489 to 491 (RGD), 498 to 500 (RGD), and 539 to 541 (RGD). Over residues 524-557 (PGEKGEPGPRGPEGGRGDFGLKGEPGRKGEKGEP) the composition is skewed to basic and acidic residues. Pro residues predominate over residues 559-569 (DPGPPGEPGPR). The nonhelical region stretch occupies residues 591 to 1019 (ECDVMTYVRE…FFDRFIRWIC (429 aa)). 2 consecutive VWFA domains span residues 615–805 (DVVF…EDVL) and 833–1014 (DIVF…FDRF). Residue Asn-630 is glycosylated (N-linked (GlcNAc...) asparagine). At Thr-701 the chain carries Phosphothreonine. Phosphoserine is present on Ser-705. N-linked (GlcNAc...) asparagine glycosylation is found at Asn-785, Asn-897, and Asn-954.

This sequence belongs to the type VI collagen family. Trimers composed of three different chains: alpha-1(VI), alpha-2(VI), and alpha-3(VI) or alpha-5(VI) or alpha-6(VI). Interacts with CSPG4. In terms of processing, prolines at the third position of the tripeptide repeating unit (G-X-Y) are hydroxylated in some or all of the chains.

The protein resides in the secreted. It is found in the extracellular space. It localises to the extracellular matrix. The protein localises to the membrane. In terms of biological role, collagen VI acts as a cell-binding protein. This chain is Collagen alpha-2(VI) chain (COL6A2), found in Homo sapiens (Human).